Here is an 858-residue protein sequence, read N- to C-terminus: Elongation factor 2 (858 aa).

In terms of domain architecture, tr-type G spans Ala17–Val362. Ala26–Ser33 contributes to the GTP binding site. Phosphothreonine is present on Thr54. A Phosphothreonine; by EEF2K modification is found at Thr57. Thr59 bears the Phosphothreonine mark. Position 152 is an N6-succinyllysine (Lys152). GTP-binding positions include Asn158–Asp161 and Ser216–Leu218. Residue Lys235 is modified to N6-acetyllysine. Lys239 carries the N6-acetyllysine; alternate modification. A Glycyl lysine isopeptide (Lys-Gly) (interchain with G-Cter in SUMO1); alternate cross-link involves residue Lys239. Phosphotyrosine; by CSK is present on Tyr265. An N6-acetyllysine; alternate modification is found at Lys272. Lys272 is subject to N6-succinyllysine; alternate. At Lys275 the chain carries N6-acetyllysine. Lys322 participates in a covalent cross-link: Glycyl lysine isopeptide (Lys-Gly) (interchain with G-Cter in SUMO). Phosphoserine is present on Ser325. Position 373 is a phosphotyrosine; by CSK (Tyr373). Thr435 is modified (phosphothreonine). N6-acetyllysine occurs at positions 439 and 445. A Phosphoserine modification is found at Ser502. Lys525 is modified (N6,N6,N6-trimethyllysine; by EEF2KMT). Lys529 participates in a covalent cross-link: Glycyl lysine isopeptide (Lys-Gly) (interchain with G-Cter in SUMO). Lys572 is subject to N6-succinyllysine. At Ser595 the chain carries Phosphoserine; by CDK2. An N6-acetyllysine modification is found at Lys619. Diphthamide is present on His715.

It belongs to the TRAFAC class translation factor GTPase superfamily. Classic translation factor GTPase family. EF-G/EF-2 subfamily. In terms of assembly, binds to 80S ribosomes. Actively translating ribosomes show mutually exclusive binding of eIF5a (EIF5A or EIF5A2) and EEF2/eEF2. Interacts with SERBP1; interaction sequesters EEF2/eEF2 at the A-site of the ribosome, thereby blocking the interaction sites of the mRNA-tRNA complex, promoting ribosome stabilization and hibernation. Interacts with HABP4; interaction takes place at the A-site of hibernating ribosomes and promotes ribosome stabilization. Component of the mRNA surveillance SURF complex, at least composed of ERF1, ERF3 (ERF3A or ERF3B), EEF2, UPF1/RENT1, SMG1, SMG8 and SMG9. Interacts with RBPMS2. In terms of processing, diphthamide is 2-[3-carboxyamido-3-(trimethyl-ammonio)propyl]histidine. Post-translationally, phosphorylation by EF-2 kinase completely inactivates EF-2; it requires prior phosphorylation by CDK2 at Ser-595 during mitotic prometaphase. Phosphorylation by CSK promotes SUMOylation, proteolytic cleavage, and nuclear translocation if the C-terminal fragment. Proteolytically processed at two sites following phosphorylation by CSK. In terms of processing, SUMOylated following phosphorylation by CSK, promotes proteolytic cleavage. Post-translationally, ISGylated.

It is found in the cytoplasm. Its subcellular location is the nucleus. It catalyses the reaction GTP + H2O = GDP + phosphate + H(+). In terms of biological role, catalyzes the GTP-dependent ribosomal translocation step during translation elongation. During this step, the ribosome changes from the pre-translocational (PRE) to the post-translocational (POST) state as the newly formed A-site-bound peptidyl-tRNA and P-site-bound deacylated tRNA move to the P and E sites, respectively. Catalyzes the coordinated movement of the two tRNA molecules, the mRNA and conformational changes in the ribosome. This is Elongation factor 2 (Eef2) from Rattus norvegicus (Rat).